The primary structure comprises 209 residues: Thymidylate kinase (209 aa).

10-17 contributes to the ATP binding site; sequence GLDGAGKS.

It belongs to the thymidylate kinase family.

The catalysed reaction is dTMP + ATP = dTDP + ADP. In terms of biological role, phosphorylation of dTMP to form dTDP in both de novo and salvage pathways of dTTP synthesis. The sequence is that of Thymidylate kinase from Francisella tularensis subsp. holarctica (strain FTNF002-00 / FTA).